Here is a 202-residue protein sequence, read N- to C-terminus: Small ribosomal subunit protein uS2 (202 aa).

It belongs to the universal ribosomal protein uS2 family.

The polypeptide is Small ribosomal subunit protein uS2 (rps2) (Pyrococcus horikoshii (strain ATCC 700860 / DSM 12428 / JCM 9974 / NBRC 100139 / OT-3)).